The primary structure comprises 249 residues: Large ribosomal subunit protein uL4 (249 aa).

This sequence belongs to the universal ribosomal protein uL4 family. In terms of assembly, part of the 50S ribosomal subunit.

Its function is as follows. One of the primary rRNA binding proteins, this protein initially binds near the 5'-end of the 23S rRNA. It is important during the early stages of 50S assembly. It makes multiple contacts with different domains of the 23S rRNA in the assembled 50S subunit and ribosome. Functionally, forms part of the polypeptide exit tunnel. The protein is Large ribosomal subunit protein uL4 of Methanospirillum hungatei JF-1 (strain ATCC 27890 / DSM 864 / NBRC 100397 / JF-1).